The following is a 189-amino-acid chain: MLGMIKNSLFGSVETWPWQVLSKGDKQDISYEERACEGGKFATVEMTDKPVDEALREAMPKVMKYVGGSNDKGIGMGMTVPISFAVFPSDGGSLQKKLKVWFRIPNEFQSNPPVPSDDSIKIEERESITVYSLQFGGYAKEADYVARAAQLRTALEGIATCRSDVYFCTGYDPPMKPYGRRNEVWLVKA.

The protein belongs to the HEBP family. As to quaternary structure, monomer.

It localises to the cytoplasm. Its function is as follows. May bind free porphyrinogens that may be present in the cell and thus facilitate removal of these potentially toxic compound. Binds with a high affinity to one molecule of heme or porphyrins. It binds metalloporphyrins, free porphyrins and N-methylprotoporphyrin with similar affinities. This chain is Heme-binding protein 1 (HEBP1), found in Sus scrofa (Pig).